The sequence spans 423 residues: D-tagatose-1,6-bisphosphate aldolase subunit GatZ (423 aa).

It belongs to the GatZ/KbaZ family. GatZ subfamily. In terms of assembly, forms a complex with GatY.

The protein operates within carbohydrate metabolism; D-tagatose 6-phosphate degradation; D-glyceraldehyde 3-phosphate and glycerone phosphate from D-tagatose 6-phosphate: step 2/2. Component of the tagatose-1,6-bisphosphate aldolase GatYZ that is required for full activity and stability of the Y subunit. Could have a chaperone-like function for the proper and stable folding of GatY. When expressed alone, GatZ does not show any aldolase activity. Is involved in the catabolism of galactitol. The chain is D-tagatose-1,6-bisphosphate aldolase subunit GatZ from Salmonella agona (strain SL483).